The chain runs to 143 residues: Cofilin (143 aa).

Residues 5 to 137 (GVAVSDEALK…AYESVLEKIS (133 aa)) form the ADF-H domain.

It belongs to the actin-binding proteins ADF family.

It localises to the cytoplasm. It is found in the cytoskeleton. The protein resides in the nucleus matrix. Controls reversibly actin polymerization and depolymerization in a pH-sensitive manner. It has the ability to bind G- and F-actin in a 1:1 ratio of cofilin to actin. Binding to F-actin is regulated by tropomyosin. It is the major component of intranuclear and cytoplasmic actin rods. Required for accumulation of actin at the cell division site via depolymerizing actin at the cell ends. In association with myosin II has a role in the assembly of the contractile ring via severing actin filaments. Involved in the maintenance of the contractile ring once formed. In association with profilin and capping protein, has a role in the mitotic reorganization of the actin cytoskeleton. This is Cofilin (COF1) from Ogataea parapolymorpha (strain ATCC 26012 / BCRC 20466 / JCM 22074 / NRRL Y-7560 / DL-1) (Yeast).